The sequence spans 217 residues: Protein GrpE (217 aa).

Over residues 1–10 the composition is skewed to basic and acidic residues; sequence MSDHAEHAAD. The tract at residues 1–39 is disordered; sequence MSDHAEHAADAADTDAPEGDDAGGDDGEQAGDDGTSALS. Residues 12 to 31 show a composition bias toward acidic residues; the sequence is ADTDAPEGDDAGGDDGEQAG.

It belongs to the GrpE family. In terms of assembly, homodimer.

It localises to the cytoplasm. Participates actively in the response to hyperosmotic and heat shock by preventing the aggregation of stress-denatured proteins, in association with DnaK and GrpE. It is the nucleotide exchange factor for DnaK and may function as a thermosensor. Unfolded proteins bind initially to DnaJ; upon interaction with the DnaJ-bound protein, DnaK hydrolyzes its bound ATP, resulting in the formation of a stable complex. GrpE releases ADP from DnaK; ATP binding to DnaK triggers the release of the substrate protein, thus completing the reaction cycle. Several rounds of ATP-dependent interactions between DnaJ, DnaK and GrpE are required for fully efficient folding. The chain is Protein GrpE from Halobacterium salinarum (strain ATCC 29341 / DSM 671 / R1).